A 407-amino-acid polypeptide reads, in one-letter code: Chorismate synthase (407 aa).

NADP(+) is bound by residues Arg-40 and Arg-46. Residues 140 to 142 (RSS), 261 to 262 (QA), Gly-305, 320 to 324 (KPIST), and Arg-346 each bind FMN.

It belongs to the chorismate synthase family. Homotetramer. FMNH2 is required as a cofactor.

It carries out the reaction 5-O-(1-carboxyvinyl)-3-phosphoshikimate = chorismate + phosphate. It functions in the pathway metabolic intermediate biosynthesis; chorismate biosynthesis; chorismate from D-erythrose 4-phosphate and phosphoenolpyruvate: step 7/7. Catalyzes the anti-1,4-elimination of the C-3 phosphate and the C-6 proR hydrogen from 5-enolpyruvylshikimate-3-phosphate (EPSP) to yield chorismate, which is the branch point compound that serves as the starting substrate for the three terminal pathways of aromatic amino acid biosynthesis. This reaction introduces a second double bond into the aromatic ring system. In Corynebacterium glutamicum (strain R), this protein is Chorismate synthase.